The following is a 360-amino-acid chain: 45 kDa calcium-binding protein (360 aa).

The first 29 residues, 1–29 (MVSKQAFLFSLGSLYLSLLFVFLLMDVYA), serve as a signal peptide directing secretion. An N-linked (GlcNAc...) asparagine glycan is attached at asparagine 33. EF-hand domains lie at 96–131 (RNRR…KTEE), 135–170 (EAVN…SKGF), 231–266 (MLKF…TVEN), 276–311 (WVRD…MNEY), and 312–347 (NALN…FTGS). Ca(2+) contacts are provided by aspartate 109, asparagine 111, aspartate 113, glutamine 115, glutamate 120, aspartate 148, aspartate 150, aspartate 152, histidine 154, glutamate 159, aspartate 244, aspartate 246, aspartate 248, lysine 250, glutamate 255, aspartate 289, asparagine 291, aspartate 293, glutamate 300, aspartate 325, asparagine 327, aspartate 329, histidine 331, and glutamate 336.

The protein belongs to the CREC family.

Its subcellular location is the golgi apparatus lumen. Functionally, may regulate calcium-dependent activities in the endoplasmic reticulum lumen or post-ER compartment. The chain is 45 kDa calcium-binding protein (sdf4) from Xenopus tropicalis (Western clawed frog).